The sequence spans 474 residues: Iroquois-class homeodomain protein irx-5 (474 aa).

A DNA-binding region (homeobox; TALE-type) is located at residues 109–171; that stretch reads DPAYRKNASR…NARRRLKKEN (63 aa). Disordered regions lie at residues 174 to 222, 252 to 294, and 453 to 474; these read TWTP…SPDG, ERNG…IQQL, and SQSQ…MSSI. Residues 182 to 199 show a composition bias toward acidic residues; it reads EDEDDDENIDLEKNEEDD. Pro residues predominate over residues 263-273; that stretch reads PPTPPLCPPDQ.

Belongs to the TALE/IRO homeobox family. As to expression, early in gastrulation, expressed in cells beneath the blastopore lip. Subsequently expressed in the neural plate in overlapping patterns with other irx members, which all share an anterior border of expression. At the time of neural tube closure (stage 19) in regions of the midbrain, hindbrain, neural tube and optic vesicle, where expression continues during tailbud stages. In stage 34, expressed throughout the eye retina. Does not appear to be expressed in the developing heart or pronephros.

Its subcellular location is the nucleus. Acts partially redundantly with other irx members in neural patterning. Required for formation of the posterior forebrain, midbrain, hindbrain, and to a lesser extent, spinal cord. Patterns the neuroectoderm in both the anterior/posterior and dorsal/ventral axes. Does not appear to play a role in pronephros kidney development. Involved in craniofacial and gonadal development. Modulates the migration of progenitor cell populations in branchial arches and gonads by repressing CXCL12. This is Iroquois-class homeodomain protein irx-5 (irx5) from Xenopus laevis (African clawed frog).